An 85-amino-acid chain; its full sequence is Probable oxaloacetate decarboxylase gamma chain (85 aa).

A helical membrane pass occupies residues 15-35 (ISGMGFVLLFLIVLIYAISFI).

It belongs to the OadG family. As to quaternary structure, heterotrimer of an alpha, a beta and a gamma subunit. It depends on Na(+) as a cofactor.

It is found in the cell membrane. It catalyses the reaction oxaloacetate + 2 Na(+)(in) + H(+) = pyruvate + 2 Na(+)(out) + CO2. In terms of biological role, catalyzes the decarboxylation of oxaloacetate coupled to Na(+) translocation. The polypeptide is Probable oxaloacetate decarboxylase gamma chain (Actinobacillus pleuropneumoniae serotype 5b (strain L20)).